The chain runs to 286 residues: MASQFQAYFKLTKFRLTSTVAFSSGMGYILAERGQVDWLNLVLFLIGGFSITVSANIINQIIERESDKLMKRTASRPLPEGIITVQQAIITSALFLIAGTVILAVYSTLNALILSLISLVIYSFIYTPLKTVSPIAVFIGAFPGAFPPMIGWIAVTGEYGWEPGVLFAIQFLWQFPHFWAIAWVLDEEYKKAGIKLLPTKDGRSKHTATIIMTYTLCLLPLGFLPYLFGMSGITSAYIALACGILFFFQTMYLWKECSVKAALLLMFGSFLYLPIVQIAFVLDKIY.

The next 8 membrane-spanning stretches (helical) occupy residues 14 to 31 (FRLTSTVAFSSGMGYILA), 38 to 58 (WLNLVLFLIGGFSITVSANII), 94 to 114 (LFLIAGTVILAVYSTLNALIL), 135 to 155 (IAVFIGAFPGAFPPMIGWIAV), 165 to 185 (VLFAIQFLWQFPHFWAIAWVL), 207 to 227 (TATIIMTYTLCLLPLGFLPYL), 228 to 248 (FGMSGITSAYIALACGILFFF), and 262 to 282 (ALLLMFGSFLYLPIVQIAFVL).

The protein belongs to the UbiA prenyltransferase family. Protoheme IX farnesyltransferase subfamily.

The protein localises to the cell inner membrane. It catalyses the reaction heme b + (2E,6E)-farnesyl diphosphate + H2O = Fe(II)-heme o + diphosphate. The protein operates within porphyrin-containing compound metabolism; heme O biosynthesis; heme O from protoheme: step 1/1. In terms of biological role, converts heme B (protoheme IX) to heme O by substitution of the vinyl group on carbon 2 of heme B porphyrin ring with a hydroxyethyl farnesyl side group. The protein is Protoheme IX farnesyltransferase of Cytophaga hutchinsonii (strain ATCC 33406 / DSM 1761 / CIP 103989 / NBRC 15051 / NCIMB 9469 / D465).